The sequence spans 298 residues: Ribosomal protein L11 methyltransferase (298 aa).

Residues Thr-152, Gly-173, Asp-195, and Asn-234 each contribute to the S-adenosyl-L-methionine site.

This sequence belongs to the methyltransferase superfamily. PrmA family.

It localises to the cytoplasm. It carries out the reaction L-lysyl-[protein] + 3 S-adenosyl-L-methionine = N(6),N(6),N(6)-trimethyl-L-lysyl-[protein] + 3 S-adenosyl-L-homocysteine + 3 H(+). Functionally, methylates ribosomal protein L11. This chain is Ribosomal protein L11 methyltransferase, found in Ralstonia nicotianae (strain ATCC BAA-1114 / GMI1000) (Ralstonia solanacearum).